A 160-amino-acid chain; its full sequence is S-ribosylhomocysteine lyase (160 aa).

Fe cation is bound by residues His57, His61, and Cys127.

It belongs to the LuxS family. In terms of assembly, homodimer. It depends on Fe cation as a cofactor.

It carries out the reaction S-(5-deoxy-D-ribos-5-yl)-L-homocysteine = (S)-4,5-dihydroxypentane-2,3-dione + L-homocysteine. Involved in the synthesis of autoinducer 2 (AI-2) which is secreted by bacteria and is used to communicate both the cell density and the metabolic potential of the environment. The regulation of gene expression in response to changes in cell density is called quorum sensing. Catalyzes the transformation of S-ribosylhomocysteine (RHC) to homocysteine (HC) and 4,5-dihydroxy-2,3-pentadione (DPD). The protein is S-ribosylhomocysteine lyase of Streptococcus pyogenes serotype M2 (strain MGAS10270).